The following is a 150-amino-acid chain: MSDSVELFTDGACKGNPGPGGWGALLVCKGVEKELWGGEANTTNNRMELTGAIRGLEELKRPCEVTLVTDSQYVMKGITEWMVNWKKRGWKTAAKEPVKNADLWQLLDEQVSRHTVKWQWVRGHIGHPGNERADQLANRGVDEVRGIRHG.

One can recognise an RNase H type-1 domain in the interval 1 to 142 (MSDSVELFTD…ADQLANRGVD (142 aa)). Residues Asp10, Glu48, Asp70, and Asp134 each coordinate Mg(2+).

It belongs to the RNase H family. Monomer. The cofactor is Mg(2+).

It is found in the cytoplasm. The enzyme catalyses Endonucleolytic cleavage to 5'-phosphomonoester.. In terms of biological role, endonuclease that specifically degrades the RNA of RNA-DNA hybrids. The protein is Ribonuclease H of Pseudomonas syringae pv. syringae (strain B728a).